The primary structure comprises 597 residues: Arginine--tRNA ligase (597 aa).

The 'HIGH' region signature appears at 138-148 (ANPTGPMHVGH).

The protein belongs to the class-I aminoacyl-tRNA synthetase family. Monomer.

It is found in the cytoplasm. It carries out the reaction tRNA(Arg) + L-arginine + ATP = L-arginyl-tRNA(Arg) + AMP + diphosphate. The chain is Arginine--tRNA ligase from Nitrobacter winogradskyi (strain ATCC 25391 / DSM 10237 / CIP 104748 / NCIMB 11846 / Nb-255).